The sequence spans 511 residues: Maturase K (511 aa).

The protein belongs to the intron maturase 2 family. MatK subfamily.

It localises to the plastid. It is found in the chloroplast. Functionally, usually encoded in the trnK tRNA gene intron. Probably assists in splicing its own and other chloroplast group II introns. This is Maturase K from Diplacus aurantiacus (Orange bush monkey flower).